The chain runs to 227 residues: PKHD-type hydroxylase Bamb_4479 (227 aa).

Residues 80 to 179 enclose the Fe2OG dioxygenase domain; the sequence is QVYPPLFNRY…RVASFFWVQS (100 aa). Positions 98, 100, and 160 each coordinate Fe cation. A 2-oxoglutarate-binding site is contributed by arginine 170.

The cofactor is Fe(2+). L-ascorbate serves as cofactor.

This Burkholderia ambifaria (strain ATCC BAA-244 / DSM 16087 / CCUG 44356 / LMG 19182 / AMMD) (Burkholderia cepacia (strain AMMD)) protein is PKHD-type hydroxylase Bamb_4479.